The following is a 143-amino-acid chain: Cofilin (143 aa).

Serine 4 carries the post-translational modification Phosphoserine. Positions 5 to 137 constitute an ADF-H domain; it reads GVAVADESLT…SYDSVLERVS (133 aa).

This sequence belongs to the actin-binding proteins ADF family. As to quaternary structure, interacts with actin and AIP1 in a ternary complex. Post-translationally, the N-terminus is blocked.

Its subcellular location is the cytoplasm. It is found in the cytoskeleton. The protein localises to the nucleus matrix. In terms of biological role, controls reversibly actin polymerization and depolymerization in a pH-sensitive manner. It has the ability to bind G- and F-actin in a 1:1 ratio of cofilin to actin. Binding to F-actin is regulated by tropomyosin. It is the major component of intranuclear and cytoplasmic actin rods. Required for accumulation of actin at the cell division site via depolymerizing actin at the cell ends. In association with myosin II has a role in the assembly of the contractile ring via severing actin filaments. Involved in the maintenance of the contractile ring once formed. In association with profilin and capping protein, has a role in the mitotic reorganization of the actin cytoskeleton. In effect, yeast cofilin increases the rate of actin polymerization by making new ends available for actin subunit addition. Such a protein complex is important for the polarized growth of yeast cells. The protein is Cofilin (COF1) of Saccharomyces cerevisiae (strain ATCC 204508 / S288c) (Baker's yeast).